The following is a 643-amino-acid chain: Threonine--tRNA ligase (643 aa).

A TGS domain is found at 1-61; the sequence is MPIITLPDGS…EQDATLEIIT (61 aa). Residues 243–534 are catalytic; the sequence is DHRKIGKALD…ITEEYAGFFP (292 aa). Zn(2+) contacts are provided by C334, H385, and H511.

The protein belongs to the class-II aminoacyl-tRNA synthetase family. In terms of assembly, homodimer. It depends on Zn(2+) as a cofactor.

It localises to the cytoplasm. It catalyses the reaction tRNA(Thr) + L-threonine + ATP = L-threonyl-tRNA(Thr) + AMP + diphosphate + H(+). Functionally, catalyzes the attachment of threonine to tRNA(Thr) in a two-step reaction: L-threonine is first activated by ATP to form Thr-AMP and then transferred to the acceptor end of tRNA(Thr). Also edits incorrectly charged L-seryl-tRNA(Thr). This chain is Threonine--tRNA ligase, found in Haemophilus influenzae (strain PittGG).